Consider the following 242-residue polypeptide: Ribonuclease 3 (242 aa).

An RNase III domain is found at 14–142 (LRRFAARFAL…VIGALYLSTG (129 aa)). Glu-56 provides a ligand contact to Mg(2+). The active site involves Asp-60. Mg(2+)-binding residues include Asp-128 and Glu-131. Glu-131 is an active-site residue. The DRBM domain occupies 170 to 235 (NHKSALQELT…ARGAYAALRS (66 aa)).

This sequence belongs to the ribonuclease III family. Homodimer. The cofactor is Mg(2+).

It is found in the cytoplasm. It carries out the reaction Endonucleolytic cleavage to 5'-phosphomonoester.. In terms of biological role, digests double-stranded RNA. Involved in the processing of primary rRNA transcript to yield the immediate precursors to the large and small rRNAs (23S and 16S). Processes some mRNAs, and tRNAs when they are encoded in the rRNA operon. Processes pre-crRNA and tracrRNA of type II CRISPR loci if present in the organism. The protein is Ribonuclease 3 of Gloeobacter violaceus (strain ATCC 29082 / PCC 7421).